A 486-amino-acid chain; its full sequence is Hexosaminidase D (486 aa).

Glu-149 acts as the Proton donor in catalysis.

The protein belongs to the glycosyl hydrolase 20 family. As to quaternary structure, homodimer; disulfide-linked. Expressed in synovial fibroblasts and synovial membranes.

The protein localises to the cytoplasm. Its subcellular location is the nucleus. It is found in the extracellular vesicle. The enzyme catalyses Hydrolysis of terminal non-reducing N-acetyl-D-hexosamine residues in N-acetyl-beta-D-hexosaminides.. Inhibited by O-(2-acetamido-2-deoxy-D-glucopyranosylidene)amino N-phenylcarbamate (PUGNAc). Inhibited by galacto-NAG-thiazoline. Functionally, has hexosaminidase activity. Responsible for the cleavage of the monosaccharides N-acetylglucosamine (GlcNAc) and N-acetylgalactosamine (GalNAc) from cellular substrates. Has a preference for galactosaminide over glucosaminide substrates. This is Hexosaminidase D from Homo sapiens (Human).